The following is an 803-amino-acid chain: PR domain zinc finger protein 4 (803 aa).

The SET domain maps to 408–532 (KQLVLRQSIV…PESELLFYYS (125 aa)). 5 C2H2-type zinc fingers span residues 593 to 615 (WKCS…FMGH), 621 to 643 (HKCD…LKIH), 649 to 671 (YRCT…MVIH), 677 to 699 (LKCD…VLIH), and 705 to 727 (IKCP…LNSH). The C2H2-type 6; degenerate zinc finger occupies 733 to 755 (YVCEKCTKAYLTKYHLTRHLKTC). Residues 757 to 803 (EPSSSSSAQEEEDDESEEEDLADSMRTEDCRMGSAVYSTDESLSAHK) form a disordered region. The span at 765 to 778 (QEEEDDESEEEDLA) shows a compositional bias: acidic residues. Polar residues predominate over residues 792–803 (VYSTDESLSAHK).

This sequence belongs to the class V-like SAM-binding methyltransferase superfamily.

It is found in the nucleus. Functionally, may function as a transcription factor involved in cell differentiation. The polypeptide is PR domain zinc finger protein 4 (Prdm4) (Mus musculus (Mouse)).